We begin with the raw amino-acid sequence, 417 residues long: NADH-quinone oxidoreductase subunit D (417 aa).

The protein belongs to the complex I 49 kDa subunit family. As to quaternary structure, NDH-1 is composed of 14 different subunits. Subunits NuoB, C, D, E, F, and G constitute the peripheral sector of the complex.

The protein localises to the cell inner membrane. The catalysed reaction is a quinone + NADH + 5 H(+)(in) = a quinol + NAD(+) + 4 H(+)(out). Functionally, NDH-1 shuttles electrons from NADH, via FMN and iron-sulfur (Fe-S) centers, to quinones in the respiratory chain. The immediate electron acceptor for the enzyme in this species is believed to be ubiquinone. Couples the redox reaction to proton translocation (for every two electrons transferred, four hydrogen ions are translocated across the cytoplasmic membrane), and thus conserves the redox energy in a proton gradient. This Francisella tularensis subsp. mediasiatica (strain FSC147) protein is NADH-quinone oxidoreductase subunit D.